The following is a 155-amino-acid chain: NADPH-dependent 7-cyano-7-deazaguanine reductase (155 aa).

The Thioimide intermediate role is filled by Cys53. The active-site Proton donor is Asp60. Residues 75–77 (VES) and 94–95 (HE) each bind substrate.

Belongs to the GTP cyclohydrolase I family. QueF type 1 subfamily.

The protein resides in the cytoplasm. It carries out the reaction 7-aminomethyl-7-carbaguanine + 2 NADP(+) = 7-cyano-7-deazaguanine + 2 NADPH + 3 H(+). The protein operates within tRNA modification; tRNA-queuosine biosynthesis. Functionally, catalyzes the NADPH-dependent reduction of 7-cyano-7-deazaguanine (preQ0) to 7-aminomethyl-7-deazaguanine (preQ1). The polypeptide is NADPH-dependent 7-cyano-7-deazaguanine reductase (Hyphomonas neptunium (strain ATCC 15444)).